A 234-amino-acid polypeptide reads, in one-letter code: Orotidine 5'-phosphate decarboxylase (234 aa).

Residues D14, K36, 63 to 72 (DLKFHDIPNT), T123, R184, Q193, G213, and R214 each bind substrate. The active-site Proton donor is the K65.

It belongs to the OMP decarboxylase family. Type 1 subfamily. As to quaternary structure, homodimer.

The catalysed reaction is orotidine 5'-phosphate + H(+) = UMP + CO2. Its pathway is pyrimidine metabolism; UMP biosynthesis via de novo pathway; UMP from orotate: step 2/2. Its function is as follows. Catalyzes the decarboxylation of orotidine 5'-monophosphate (OMP) to uridine 5'-monophosphate (UMP). The protein is Orotidine 5'-phosphate decarboxylase of Psychromonas ingrahamii (strain DSM 17664 / CCUG 51855 / 37).